The chain runs to 189 residues: Elongation factor P (189 aa).

It belongs to the elongation factor P family.

It is found in the cytoplasm. Its pathway is protein biosynthesis; polypeptide chain elongation. Involved in peptide bond synthesis. Stimulates efficient translation and peptide-bond synthesis on native or reconstituted 70S ribosomes in vitro. Probably functions indirectly by altering the affinity of the ribosome for aminoacyl-tRNA, thus increasing their reactivity as acceptors for peptidyl transferase. This Pseudomonas syringae pv. tomato (strain ATCC BAA-871 / DC3000) protein is Elongation factor P.